The sequence spans 1324 residues: DNA-directed RNA polymerase subunit beta' (1324 aa).

Zn(2+) contacts are provided by cysteine 219, cysteine 292, cysteine 299, and cysteine 302. Residues 1293–1324 are disordered; it reads ARDFEFASSDVEEDELTEEDDDYGDEEEEDAF. Residues 1302–1324 show a composition bias toward acidic residues; it reads DVEEDELTEEDDDYGDEEEEDAF.

Belongs to the RNA polymerase beta' chain family. RpoC2 subfamily. In terms of assembly, in cyanobacteria the RNAP catalytic core is composed of 2 alpha, 1 beta, 1 beta', 1 gamma and 1 omega subunit. When a sigma factor is associated with the core the holoenzyme is formed, which can initiate transcription. Zn(2+) is required as a cofactor.

It carries out the reaction RNA(n) + a ribonucleoside 5'-triphosphate = RNA(n+1) + diphosphate. Its function is as follows. DNA-dependent RNA polymerase catalyzes the transcription of DNA into RNA using the four ribonucleoside triphosphates as substrates. The polypeptide is DNA-directed RNA polymerase subunit beta' (Thermosynechococcus vestitus (strain NIES-2133 / IAM M-273 / BP-1)).